The primary structure comprises 127 residues: Thioredoxin domain-containing protein 8 (127 aa).

Positions 2-127 constitute a Thioredoxin domain; the sequence is VQKIKSMREF…KLEEKIQELM (126 aa). Residues Cys32 and Cys35 are joined by a disulfide bond.

The protein belongs to the thioredoxin family. Testis-specific. Expressed in spermatozoa, sperm tail, elongated and round spermatids.

It localises to the cytoplasm. The protein localises to the golgi apparatus. Functionally, may be required for post-translational modifications of proteins required for acrosomal biogenesis. May act by reducing disulfide bonds within the sperm. In Rattus norvegicus (Rat), this protein is Thioredoxin domain-containing protein 8 (Txndc8).